A 186-amino-acid polypeptide reads, in one-letter code: MKLIAGLGNPGKKYERTRHNVGFMVVDELSFRHQTPWKKSKFNGMTSEIIVGGEKMILVKPLTFMNASGECIRPLMDYYNIPIEDVVIVYDDLDLPVGKIRLRQKGSAGGHNGMKSIIQHVKTQEFNRIRVGVSRPLKGEVINYVLGDFPKAEQPDIIAAIQKSADAIEDFAQTPFIEVMNKYNQK.

A tRNA-binding site is contributed by Tyr-14. His-19 (proton acceptor) is an active-site residue. TRNA is bound by residues Phe-64, Asn-66, and Asn-112.

Belongs to the PTH family. As to quaternary structure, monomer.

The protein localises to the cytoplasm. It carries out the reaction an N-acyl-L-alpha-aminoacyl-tRNA + H2O = an N-acyl-L-amino acid + a tRNA + H(+). Its function is as follows. Hydrolyzes ribosome-free peptidyl-tRNAs (with 1 or more amino acids incorporated), which drop off the ribosome during protein synthesis, or as a result of ribosome stalling. In terms of biological role, catalyzes the release of premature peptidyl moieties from peptidyl-tRNA molecules trapped in stalled 50S ribosomal subunits, and thus maintains levels of free tRNAs and 50S ribosomes. The chain is Peptidyl-tRNA hydrolase from Listeria monocytogenes serovar 1/2a (strain ATCC BAA-679 / EGD-e).